The following is a 398-amino-acid chain: NADH dehydrogenase [ubiquinone] iron-sulfur protein 2 (398 aa).

Cys-261, Cys-267, and Cys-282 together coordinate [4Fe-4S] cluster.

The protein belongs to the complex I 49 kDa subunit family. Complex I is composed of about 45 different subunits. This is a component of the iron-sulfur (IP) fragment of the enzyme. Requires [4Fe-4S] cluster as cofactor.

It is found in the mitochondrion. The enzyme catalyses a ubiquinone + NADH + 5 H(+)(in) = a ubiquinol + NAD(+) + 4 H(+)(out). Functionally, core subunit of the mitochondrial membrane respiratory chain NADH dehydrogenase (Complex I) that is believed to belong to the minimal assembly required for catalysis. Complex I functions in the transfer of electrons from NADH to the respiratory chain. The immediate electron acceptor for the enzyme is believed to be ubiquinone. Component of the iron-sulfur (IP) fragment of the enzyme. The protein is NADH dehydrogenase [ubiquinone] iron-sulfur protein 2 (NAD7) of Nephroselmis olivacea (Green alga).